A 446-amino-acid polypeptide reads, in one-letter code: Histidine--tRNA ligase (446 aa).

This sequence belongs to the class-II aminoacyl-tRNA synthetase family. Homodimer.

The protein localises to the cytoplasm. The enzyme catalyses tRNA(His) + L-histidine + ATP = L-histidyl-tRNA(His) + AMP + diphosphate + H(+). The protein is Histidine--tRNA ligase of Burkholderia pseudomallei (strain 668).